Consider the following 202-residue polypeptide: Na(+)-translocating NADH-quinone reductase subunit E (202 aa).

Transmembrane regions (helical) follow at residues 11-31 (AVFV…FIAI), 35-55 (VETA…TMPV), 79-99 (LSFL…QILE), 114-134 (GVFL…LFMV), 144-164 (TVYG…LAGI), and 180-200 (LGIT…FSGV).

Belongs to the NqrDE/RnfAE family. As to quaternary structure, composed of six subunits; NqrA, NqrB, NqrC, NqrD, NqrE and NqrF.

The protein resides in the cell inner membrane. It catalyses the reaction a ubiquinone + n Na(+)(in) + NADH + H(+) = a ubiquinol + n Na(+)(out) + NAD(+). Functionally, NQR complex catalyzes the reduction of ubiquinone-1 to ubiquinol by two successive reactions, coupled with the transport of Na(+) ions from the cytoplasm to the periplasm. NqrA to NqrE are probably involved in the second step, the conversion of ubisemiquinone to ubiquinol. The protein is Na(+)-translocating NADH-quinone reductase subunit E of Ectopseudomonas mendocina (strain ymp) (Pseudomonas mendocina).